The following is a 98-amino-acid chain: Large ribosomal subunit protein eL21 (98 aa).

A disordered region spans residues 1–24; it reads MVKMSHGPRSGSRRKLTKSAEERK.

The protein belongs to the eukaryotic ribosomal protein eL21 family.

This is Large ribosomal subunit protein eL21 (rpl21e) from Thermoplasma acidophilum (strain ATCC 25905 / DSM 1728 / JCM 9062 / NBRC 15155 / AMRC-C165).